The sequence spans 385 residues: UDP-N-acetylglucosamine--N-acetylmuramyl-(pentapeptide) pyrophosphoryl-undecaprenol N-acetylglucosamine transferase (385 aa).

Residues 24–26 (TAG), Asn143, Arg180, Ser214, and Gln310 each bind UDP-N-acetyl-alpha-D-glucosamine.

This sequence belongs to the glycosyltransferase 28 family. MurG subfamily.

The protein localises to the cell membrane. It catalyses the reaction di-trans,octa-cis-undecaprenyl diphospho-N-acetyl-alpha-D-muramoyl-L-alanyl-D-glutamyl-meso-2,6-diaminopimeloyl-D-alanyl-D-alanine + UDP-N-acetyl-alpha-D-glucosamine = di-trans,octa-cis-undecaprenyl diphospho-[N-acetyl-alpha-D-glucosaminyl-(1-&gt;4)]-N-acetyl-alpha-D-muramoyl-L-alanyl-D-glutamyl-meso-2,6-diaminopimeloyl-D-alanyl-D-alanine + UDP + H(+). Its pathway is cell wall biogenesis; peptidoglycan biosynthesis. In terms of biological role, cell wall formation. Catalyzes the transfer of a GlcNAc subunit on undecaprenyl-pyrophosphoryl-MurNAc-pentapeptide (lipid intermediate I) to form undecaprenyl-pyrophosphoryl-MurNAc-(pentapeptide)GlcNAc (lipid intermediate II). This chain is UDP-N-acetylglucosamine--N-acetylmuramyl-(pentapeptide) pyrophosphoryl-undecaprenol N-acetylglucosamine transferase, found in Mycolicibacterium smegmatis (strain ATCC 700084 / mc(2)155) (Mycobacterium smegmatis).